Consider the following 445-residue polypeptide: Serine/threonine-protein kinase Nek2 (445 aa).

Residues 8-271 enclose the Protein kinase domain; it reads YEVLYTIGTG…VEEILENPLI (264 aa). ATP contacts are provided by residues 14 to 22 and Lys37; that span reads IGTGSYGRC. The active-site Proton acceptor is Asp141. The residue at position 170 (Thr170) is a Phosphothreonine; by autocatalysis. Ser171 is modified (phosphoserine; by autocatalysis). Phosphothreonine; by autocatalysis is present on residues Thr175 and Thr179. The residue at position 184 (Ser184) is a Phosphoserine. Ser241 carries the post-translational modification Phosphoserine; by autocatalysis. The tract at residues 264–445 is interaction with PCNT; that stretch reads EILENPLIAD…LKSRQILGMR (182 aa). Ser296 and Ser300 each carry phosphoserine. The tract at residues 301-445 is interaction with CEP85; that stretch reads PVLSELKLKE…LKSRQILGMR (145 aa). A coiled-coil region spans residues 303–362; the sequence is LSELKLKEIQLQERERALKAREERLEQKEQELCVRERLAEDKLARAENLLKNYSLLKERK. The tract at residues 306–334 is leucine-zipper; that stretch reads LKLKEIQLQERERALKAREERLEQKEQEL. Residues 329 to 445 are necessary for interaction with MAD1L1; sequence QKEQELCVRE…LKSRQILGMR (117 aa). A required for microtubule binding and for localization to the centrosomes region spans residues 333–370; sequence ELCVRERLAEDKLARAENLLKNYSLLKERKFLSLASNP. Residues Ser356 and Ser365 each carry the phosphoserine; by STK3/MST2 modification. Ser387, Ser390, Ser397, and Ser402 each carry phosphoserine. Residues 403-439 are interaction with SAV1 and STK3/MST2; the sequence is QLTSKSKCKDLKKRLHAAQLRAQALSDIEKNYQLKSR. Ser406 bears the Phosphoserine; by STK3/MST2 mark. Residues 406–430 are a coiled coil; the sequence is SKSKCKDLKKRLHAAQLRAQALSDI. The residue at position 428 (Ser428) is a Phosphoserine. Ser438 carries the phosphoserine; by STK3/MST2 modification.

The protein belongs to the protein kinase superfamily. NEK Ser/Thr protein kinase family. NIMA subfamily. As to quaternary structure, isoform 1, isoform 2 and isoform 4 form homo- and heterodimers. Interacts with NECAB3 and HMGA2. Isoform 1 interacts with CDC20, CTNB1, MAD1L1, MAPK, NEK11, NPM1, NDC80, PCNT and SGO1. Isoform 1 interacts with STK3/MST2 (via SARAH domain) and SAV1 (via SARAH domain). Isoform 1 and isoform 2 interact with MAD2L1. Isoform 1 and isoform 4 interact with PPP1CA and PPP1CC. Interacts with CEP68; the interaction leads to phosphorylation of CEP68. Interacts with CNTLN; the interaction leads to phosphorylation of CNTLN. Isoform 1 interacts with CEP85. Interacts with CCDC102B; the interaction leads to phosphorylation of CCDC102B. Requires Mg(2+) as cofactor. Activated by autophosphorylation. Protein phosphatase 1 represses autophosphorylation and activation of isoform 1 by dephosphorylation. Phosphorylation by STK3/MST2 is necessary for its localization to the centrosome. Isoform 1 and isoform 2 are expressed in peripheral blood T-cells and a wide variety of transformed cell types. Isoform 1 and isoform 4 are expressed in the testis. Up-regulated in various cancer cell lines, as well as primary breast tumors.

It is found in the nucleus. The protein localises to the nucleolus. The protein resides in the cytoplasm. Its subcellular location is the cytoskeleton. It localises to the microtubule organizing center. It is found in the centrosome. The protein localises to the spindle pole. The protein resides in the chromosome. Its subcellular location is the centromere. It localises to the kinetochore. The enzyme catalyses L-seryl-[protein] + ATP = O-phospho-L-seryl-[protein] + ADP + H(+). It carries out the reaction L-threonyl-[protein] + ATP = O-phospho-L-threonyl-[protein] + ADP + H(+). Its activity is regulated as follows. Isoform 1 is inhibited by ionizing radiation in the presence of PPP1CA. Its catalytic activity is inhibited by the inhibitor CCT241950. In the presence of this inhibitor, displays an autoinhibited conformation: Tyr-70 side chain points into the active site, interacts with the activation loop, and blocks the alphaC helix. In terms of biological role, protein kinase which is involved in the control of centrosome separation and bipolar spindle formation in mitotic cells and chromatin condensation in meiotic cells. Regulates centrosome separation (essential for the formation of bipolar spindles and high-fidelity chromosome separation) by phosphorylating centrosomal proteins such as CROCC, CEP250 and NINL, resulting in their displacement from the centrosomes. Regulates kinetochore microtubule attachment stability in mitosis via phosphorylation of NDC80. Involved in regulation of mitotic checkpoint protein complex via phosphorylation of CDC20 and MAD2L1. Plays an active role in chromatin condensation during the first meiotic division through phosphorylation of HMGA2. Phosphorylates: PPP1CC; SGO1; NECAB3 and NPM1. Essential for localization of MAD2L1 to kinetochore and MAPK1 and NPM1 to the centrosome. Phosphorylates CEP68 and CNTLN directly or indirectly. NEK2-mediated phosphorylation of CEP68 promotes CEP68 dissociation from the centrosome and its degradation at the onset of mitosis. Involved in the regulation of centrosome disjunction. Phosphorylates CCDC102B either directly or indirectly which causes CCDC102B to dissociate from the centrosome and allows for centrosome separation. Functionally, phosphorylates and activates NEK11 in G1/S-arrested cells. Not present in the nucleolus and, in contrast to isoform 1, does not phosphorylate and activate NEK11 in G1/S-arrested cells. This chain is Serine/threonine-protein kinase Nek2 (NEK2), found in Homo sapiens (Human).